The sequence spans 129 residues: Thylakoid-associated single-stranded DNA-binding protein slr1034 (129 aa).

The SSB domain occupies 1–100 (MNSFVLMATV…LTASRISLVD (100 aa)). Positions 99–129 (VDSGNGINPGELSSPPEPEAVDLSNTDDIPF) are disordered.

In terms of assembly, homotetramer.

Its subcellular location is the cellular thylakoid membrane. The sequence is that of Thylakoid-associated single-stranded DNA-binding protein slr1034 from Synechocystis sp. (strain ATCC 27184 / PCC 6803 / Kazusa).